Reading from the N-terminus, the 581-residue chain is MKSHIQSLLEQTIESFKQQGILPADFEARIQVDRTKDKSHGDLATNLAMMLTKAAGKNPRELAQLIIDNLPASNYVAKVEIAGPGFINFFIDDSALANQLQAAISDEHLGIKLPTPQTIVVDYSSPNLAKEMHVGHLRSTIIGDSVVRTLEFLGHKVIRQNHVGDWGTQFGMLLAYMEELRAQNGEQAQLELSDLETFYRAAKLRFDESAEFATRARQLVVELQSGDEYCNKLWREFNDISLSHCHEVYERLGVSLTRADVHGESAYNADLEQVVKDLDAQGLLTQSNGAKVVFQEEFRNKEGEALPVIIQKADGGYLYATTDLAAMRYRSSVLKADRVLYFVDLRQALHFQQVFSLAKLAKFVRNDMSLEHLGFGTMNGEDGRPFKTRTGGVVKLVDLLDEANTRALELVRSKNPDMDEATLAEIARVVGISAVKYADLSKNRTSDYIFSFEQMLSFEGNTAPYLLYAYTRVAGIFKRATDIDLSQAKIVLEHEKEKDLGNKLAQFGEILSRVVDKGQPHVLCGYLYELAGAFSSFYEACPVLAADNDEQKHSRLLLSQLTANTLQKGLNLLGIETLERM.

The 'HIGH' region signature appears at P126 to H136.

This sequence belongs to the class-I aminoacyl-tRNA synthetase family. In terms of assembly, monomer.

The protein resides in the cytoplasm. The catalysed reaction is tRNA(Arg) + L-arginine + ATP = L-arginyl-tRNA(Arg) + AMP + diphosphate. This Shewanella sp. (strain ANA-3) protein is Arginine--tRNA ligase.